The primary structure comprises 1015 residues: Putative ankyrin repeat protein R96 (1015 aa).

Over residues 1-14 (MSTVKKSSKKKSSK) the composition is skewed to basic residues. A disordered region spans residues 1–37 (MSTVKKSSKKKSSKKSSSGNESSKKSSPKIVPKHTAK). ANK repeat units lie at residues 136 to 165 (NGHK…NIDF), 168 to 201 (APSN…AVNI), 202 to 231 (DGRS…DVEV), 340 to 370 (LGHN…DFQA), 374 to 403 (NITN…KIVS), 456 to 485 (SGYR…TIFA), 498 to 527 (NNND…QFQL), and 535 to 564 (TVPT…ITDC).

The protein is Putative ankyrin repeat protein R96 of Acanthamoeba polyphaga mimivirus (APMV).